Consider the following 440-residue polypeptide: Protein disulfide-isomerase A6 (440 aa).

The N-terminal stretch at 1–19 (MALLVLGLVSCTFFLAVNG) is a signal peptide. Thioredoxin domains lie at 20–133 (LYSS…ALRQ) and 154–287 (SDSS…EDIA). Active-site nucleophile residues include cysteine 55 and cysteine 58. A disulfide bond links cysteine 55 and cysteine 58. The residue at position 129 (serine 129) is a Phosphoserine. Residues 141 to 161 (GRSGGYSSGKQGRSDSSSKKD) are disordered. Basic and acidic residues predominate over residues 152 to 161 (GRSDSSSKKD). The residue at position 156 (serine 156) is a Phosphoserine; by FAM20C. Serine 158 bears the Phosphoserine mark. Active-site nucleophile residues include cysteine 190 and cysteine 193. Residues cysteine 190 and cysteine 193 are joined by a disulfide bond. Serine 428 carries the phosphoserine modification. The Prevents secretion from ER motif lies at 437 to 440 (KDEL).

The protein belongs to the protein disulfide isomerase family. Part of a large chaperone multiprotein complex comprising DNAJB11, HSP90B1, HSPA5, HYOU, PDIA2, PDIA4, PDIA6, PPIB, SDF2L1, UGGT1 and very small amounts of ERP29, but not, or at very low levels, CALR nor CANX. Interacts with MICA on the surface of tumor cells, leading to MICA disulfide bond reduction which is required for its release from tumor cells. Interacts with ITGB3 following platelet stimulation. Interacts with ERN1; the interaction is direct. Interacts with EIF2AK3. As to expression, expressed in platelets (at protein level).

It is found in the endoplasmic reticulum lumen. The protein localises to the cell membrane. Its subcellular location is the melanosome. The catalysed reaction is Catalyzes the rearrangement of -S-S- bonds in proteins.. Its function is as follows. May function as a chaperone that inhibits aggregation of misfolded proteins. Negatively regulates the unfolded protein response (UPR) through binding to UPR sensors such as ERN1, which in turn inactivates ERN1 signaling. May also regulate the UPR via the EIF2AK3 UPR sensor. Plays a role in platelet aggregation and activation by agonists such as convulxin, collagen and thrombin. The protein is Protein disulfide-isomerase A6 (PDIA6) of Homo sapiens (Human).